A 498-amino-acid chain; its full sequence is Glutamyl-tRNA(Gln) amidotransferase subunit A (498 aa).

Active-site charge relay system residues include K80 and S155. The disordered stretch occupies residues 132–159; the sequence is SSTENSAYGPTRNPWDTDRVPGGSSGGS. Catalysis depends on S179, which acts as the Acyl-ester intermediate.

The protein belongs to the amidase family. GatA subfamily. In terms of assembly, heterotrimer of A, B and C subunits.

The enzyme catalyses L-glutamyl-tRNA(Gln) + L-glutamine + ATP + H2O = L-glutaminyl-tRNA(Gln) + L-glutamate + ADP + phosphate + H(+). Allows the formation of correctly charged Gln-tRNA(Gln) through the transamidation of misacylated Glu-tRNA(Gln) in organisms which lack glutaminyl-tRNA synthetase. The reaction takes place in the presence of glutamine and ATP through an activated gamma-phospho-Glu-tRNA(Gln). This chain is Glutamyl-tRNA(Gln) amidotransferase subunit A, found in Thermobifida fusca (strain YX).